The chain runs to 69 residues: Probable cold shock protein y4cH (69 aa).

The 61-residue stretch at G5–D65 folds into the CSD domain.

The protein localises to the cytoplasm. In Sinorhizobium fredii (strain NBRC 101917 / NGR234), this protein is Probable cold shock protein y4cH.